Consider the following 261-residue polypeptide: Ribosome biogenesis protein nsa2 (261 aa).

Basic and acidic residues-rich tracts occupy residues 1 to 36 and 66 to 82; these read MPQN…HKQS and KQHE…EKDP. Disordered stretches follow at residues 1-44 and 64-97; these read MPQN…NLRG and AIKQ…SNPT. Residues 15–22 carry the Nuclear localization signal motif; the sequence is GKRLDTEE.

The protein belongs to the eukaryotic ribosomal protein eS8 family. Ribosome biogenesis protein NSA2 subfamily. As to quaternary structure, component of the pre-66S ribosomal particle. Interacts with nop7 and rrp1. Interacts with rsa4 (via WD repeats).

The protein localises to the nucleus. Its subcellular location is the nucleolus. In terms of biological role, involved in the biogenesis of the 60S ribosomal subunit. May play a part in the quality control of pre-60S particles. In Neurospora crassa (strain ATCC 24698 / 74-OR23-1A / CBS 708.71 / DSM 1257 / FGSC 987), this protein is Ribosome biogenesis protein nsa2 (rbg-52).